The chain runs to 224 residues: Small ribosomal subunit protein uS5 (224 aa).

The tract at residues 1 to 38 (MAEQSAGGQGAPEGRDSRDSREGRGRRDGGRGGRDSDK) is disordered. Basic and acidic residues predominate over residues 13 to 38 (EGRDSRDSREGRGRRDGGRGGRDSDK). The 64-residue stretch at 41-104 (YLERVVAINR…EEARKGFFRV (64 aa)) folds into the S5 DRBM domain.

The protein belongs to the universal ribosomal protein uS5 family. Part of the 30S ribosomal subunit. Contacts proteins S4 and S8.

Functionally, with S4 and S12 plays an important role in translational accuracy. Located at the back of the 30S subunit body where it stabilizes the conformation of the head with respect to the body. This is Small ribosomal subunit protein uS5 from Mycobacterium ulcerans (strain Agy99).